A 1136-amino-acid chain; its full sequence is Myosin-binding protein C, fast-type (1136 aa).

Disordered stretches follow at residues 1–55 and 151–177; these read MPEA…KKPD and APRQ…DAGE. The span at 13-35 shows a compositional bias: basic and acidic residues; that stretch reads KGKDAPKEAPAKQTPEEPPKEAP. Positions 46–149 constitute an Ig-like C2-type 1 domain; that stretch reads PTGIFLKKPD…CDSCSFNVDV (104 aa). Over residues 163 to 174 the composition is skewed to basic and acidic residues; it reads SFKRSGDGKSED. 4 consecutive Ig-like C2-type domains span residues 250–339, 340–432, 433–533, and 534–633; these read SAAF…VKEP, PVLI…VEEK, QLEV…KQEP, and PKIH…VVDV. Fibronectin type-III domains lie at 636–732 and 734–829; these read PPEA…IAPT and APQH…IREI. Residues 833–927 form the Ig-like C2-type 6 domain; that stretch reads PKIRLPRHLR…ATIRIRVVEK (95 aa). Positions 930–1025 constitute a Fibronectin type-III 3 domain; that stretch reads PAENVMVKEV…SKNTARILKT (96 aa). Residues 1043–1136 form the Ig-like C2-type 7 domain; it reads PKFLTPLMDR…ECKLDVRVPQ (94 aa).

Belongs to the immunoglobulin superfamily. MyBP family.

In terms of biological role, thick filament-associated protein located in the crossbridge region of vertebrate striated muscle a bands. In vitro it binds MHC, F-actin and native thin filaments, and modifies the activity of actin-activated myosin ATPase. It may modulate muscle contraction or may play a more structural role. The chain is Myosin-binding protein C, fast-type (Mybpc2) from Mus musculus (Mouse).